Consider the following 193-residue polypeptide: dCTP deaminase (193 aa).

Residues Arg110–Arg115, Asp128, Val136–Glu138, Tyr171, Lys178, and Gln182 contribute to the dCTP site. Residue Glu138 is the Proton donor/acceptor of the active site. The segment at Tyr171–Asp193 is disordered.

It belongs to the dCTP deaminase family. In terms of assembly, homotrimer.

It catalyses the reaction dCTP + H2O + H(+) = dUTP + NH4(+). The protein operates within pyrimidine metabolism; dUMP biosynthesis; dUMP from dCTP (dUTP route): step 1/2. Functionally, catalyzes the deamination of dCTP to dUTP. This is dCTP deaminase from Shewanella oneidensis (strain ATCC 700550 / JCM 31522 / CIP 106686 / LMG 19005 / NCIMB 14063 / MR-1).